A 382-amino-acid polypeptide reads, in one-letter code: Anhydro-N-acetylmuramic acid kinase (382 aa).

Residue 9–16 coordinates ATP; that stretch reads GTSLDGID.

This sequence belongs to the anhydro-N-acetylmuramic acid kinase family.

The enzyme catalyses 1,6-anhydro-N-acetyl-beta-muramate + ATP + H2O = N-acetyl-D-muramate 6-phosphate + ADP + H(+). The protein operates within amino-sugar metabolism; 1,6-anhydro-N-acetylmuramate degradation. It functions in the pathway cell wall biogenesis; peptidoglycan recycling. Its function is as follows. Catalyzes the specific phosphorylation of 1,6-anhydro-N-acetylmuramic acid (anhMurNAc) with the simultaneous cleavage of the 1,6-anhydro ring, generating MurNAc-6-P. Is required for the utilization of anhMurNAc either imported from the medium or derived from its own cell wall murein, and thus plays a role in cell wall recycling. The chain is Anhydro-N-acetylmuramic acid kinase from Bacillus thuringiensis subsp. konkukian (strain 97-27).